A 64-amino-acid chain; its full sequence is Alternative prion protein (64 aa).

The segment at 1–22 (MEHWGEPIPGTGQSWRQPLSTS) is disordered. Residues 11 to 22 (TGQSWRQPLSTS) are compositionally biased toward polar residues. Residues 40 to 58 (WRWLGSAPWWWLGTATWWW) form a helical membrane-spanning segment.

It localises to the mitochondrion outer membrane. The sequence is that of Alternative prion protein from Ovis aries (Sheep).